The following is a 162-amino-acid chain: Type IV major fimbrial protein FimA (162 aa).

Residues 1–7 constitute a propeptide, leader sequence; sequence MKSLQKG. Phe-8 is subject to N-methylphenylalanine. A helical transmembrane segment spans residues 8–28; it reads FTLIELMIVVAIIGILAAFAI. A disulfide bond links Cys-63 and Cys-106.

The protein belongs to the N-Me-Phe pilin family.

The protein resides in the fimbrium. It localises to the membrane. Its function is as follows. Major component of the type IV fimbriae that plays an essential role in twitching motility, natural transformation, and protease secretion. This Dichelobacter nodosus (strain VCS1703A) protein is Type IV major fimbrial protein FimA (fimA).